The chain runs to 317 residues: ATP synthase gamma chain (317 aa).

This sequence belongs to the ATPase gamma chain family. In terms of assembly, F-type ATPases have 2 components, CF(1) - the catalytic core - and CF(0) - the membrane proton channel. CF(1) has five subunits: alpha(3), beta(3), gamma(1), delta(1), epsilon(1). CF(0) has three main subunits: a, b and c.

It localises to the cellular thylakoid membrane. In terms of biological role, produces ATP from ADP in the presence of a proton gradient across the membrane. The gamma chain is believed to be important in regulating ATPase activity and the flow of protons through the CF(0) complex. The protein is ATP synthase gamma chain of Acaryochloris marina (strain MBIC 11017).